A 369-amino-acid chain; its full sequence is Galactose-1-phosphate uridylyltransferase (369 aa).

Positions 54 and 57 each coordinate Zn(2+). Residues Ala63 and 79–80 (ND) contribute to the UDP-alpha-D-glucose site. His127 lines the Zn(2+) pocket. Asn172 provides a ligand contact to UDP-alpha-D-glucose. His183 is a Zn(2+) binding site. The active-site Tele-UMP-histidine intermediate is the His185. Gln187 contacts UDP-alpha-D-glucose. 4 residues coordinate Fe cation: Glu201, His300, His317, and His319. UDP-alpha-D-glucose is bound by residues 332–335 (KFCV) and 337–338 (FE).

Belongs to the galactose-1-phosphate uridylyltransferase type 1 family. Homodimer. Zn(2+) is required as a cofactor.

The enzyme catalyses alpha-D-galactose 1-phosphate + UDP-alpha-D-glucose = alpha-D-glucose 1-phosphate + UDP-alpha-D-galactose. Its pathway is carbohydrate metabolism; galactose metabolism. The polypeptide is Galactose-1-phosphate uridylyltransferase (gal7) (Schizosaccharomyces pombe (strain 972 / ATCC 24843) (Fission yeast)).